Here is a 47-residue protein sequence, read N- to C-terminus: Turripeptide Ici9.1 (47 aa).

3 disulfides stabilise this stretch: Cys-1-Cys-31, Cys-5-Cys-24, and Cys-13-Cys-45. The Kazal-like domain occupies 1 to 47 (CLSVCSMEYWPVCGSDGKTYPNECHLTSEACMSNTDITVAHVGKCDQ).

Belongs to the conopeptide P-like superfamily. As to expression, expressed by the venom duct.

The protein localises to the secreted. Acts as a neurotoxin by inhibiting an ion channel. May also act as a serine protease inhibitor, since it possess the kazal serine protease inhibitor signature. The chain is Turripeptide Ici9.1 from Iotyrris cingulifera (Sea snail).